We begin with the raw amino-acid sequence, 682 residues long: Potassium-transporting ATPase ATP-binding subunit (682 aa).

A run of 4 helical transmembrane segments spans residues 34–54 (PVMF…IAMA), 62–82 (ALFS…ANFA), 219–239 (IALT…TATL), and 254–274 (VLVA…LSAI). D307 acts as the 4-aspartylphosphate intermediate in catalysis. Residues D344, E348, 377–384 (FTAQSRMS), and K395 each bind ATP. Positions 518 and 522 each coordinate Mg(2+). The next 3 membrane-spanning stretches (helical) occupy residues 588 to 608 (FAII…LNIM), 616 to 636 (AILS…PLAL), and 656 to 676 (IYGL…DLLL).

Belongs to the cation transport ATPase (P-type) (TC 3.A.3) family. Type IA subfamily. In terms of assembly, the system is composed of three essential subunits: KdpA, KdpB and KdpC.

It is found in the cell inner membrane. The enzyme catalyses K(+)(out) + ATP + H2O = K(+)(in) + ADP + phosphate + H(+). In terms of biological role, part of the high-affinity ATP-driven potassium transport (or Kdp) system, which catalyzes the hydrolysis of ATP coupled with the electrogenic transport of potassium into the cytoplasm. This subunit is responsible for energy coupling to the transport system and for the release of the potassium ions to the cytoplasm. The chain is Potassium-transporting ATPase ATP-binding subunit from Escherichia coli O139:H28 (strain E24377A / ETEC).